The primary structure comprises 312 residues: Glycerol-3-phosphate dehydrogenase [NAD(P)+] (312 aa).

Residues Trp11, Arg30, Arg31, and Lys95 each contribute to the NADPH site. Positions 95, 123, and 125 each coordinate sn-glycerol 3-phosphate. Ala127 lines the NADPH pocket. Residues Lys177, Asp230, Ser240, Arg241, and Asn242 each contribute to the sn-glycerol 3-phosphate site. Catalysis depends on Lys177, which acts as the Proton acceptor. Arg241 provides a ligand contact to NADPH. NADPH contacts are provided by Val265 and Glu267.

This sequence belongs to the NAD-dependent glycerol-3-phosphate dehydrogenase family.

It localises to the cytoplasm. The enzyme catalyses sn-glycerol 3-phosphate + NAD(+) = dihydroxyacetone phosphate + NADH + H(+). It catalyses the reaction sn-glycerol 3-phosphate + NADP(+) = dihydroxyacetone phosphate + NADPH + H(+). It functions in the pathway membrane lipid metabolism; glycerophospholipid metabolism. Catalyzes the reduction of the glycolytic intermediate dihydroxyacetone phosphate (DHAP) to sn-glycerol 3-phosphate (G3P), the key precursor for phospholipid synthesis. This is Glycerol-3-phosphate dehydrogenase [NAD(P)+] from Helicobacter pylori (strain HPAG1).